Reading from the N-terminus, the 837-residue chain is Translation initiation factor IF-2 (837 aa).

Residues 94-252 (QRSPEEIEAE…NAHGFQSPTG (159 aa)) form a disordered region. Residues 96–136 (SPEEIEAERKRELDERRAVENAARQKAEEEARVRAEEEARR) are compositionally biased toward basic and acidic residues. Residues 137–171 (QPAAPSAPAEAVAAPAPVAEPVREAAPVVAAAPAA) are compositionally biased toward low complexity. 2 stretches are compositionally biased toward basic and acidic residues: residues 172–213 (DTRK…EKAP) and 221–230 (TTDEESDGFR). Positions 231-244 (RGGRGKAKLKKRNA) are enriched in basic residues. One can recognise a tr-type G domain in the interval 337 to 506 (PRAPVVTVMG…LLQAEVLELT (170 aa)). A G1 region spans residues 346–353 (GHVDHGKT). Residue 346-353 (GHVDHGKT) participates in GTP binding. The segment at 371–375 (GITQH) is G2. The G3 stretch occupies residues 392 to 395 (DTPG). GTP is bound by residues 392–396 (DTPGH) and 446–449 (NKID). The interval 446–449 (NKID) is G4. Positions 482 to 484 (SAK) are G5.

Belongs to the TRAFAC class translation factor GTPase superfamily. Classic translation factor GTPase family. IF-2 subfamily.

It is found in the cytoplasm. One of the essential components for the initiation of protein synthesis. Protects formylmethionyl-tRNA from spontaneous hydrolysis and promotes its binding to the 30S ribosomal subunits. Also involved in the hydrolysis of GTP during the formation of the 70S ribosomal complex. This is Translation initiation factor IF-2 from Pseudomonas fluorescens (strain Pf0-1).